A 121-amino-acid polypeptide reads, in one-letter code: Small basic protein (121 aa).

3 consecutive transmembrane segments (helical) span residues 2–22 (WLPVLGLVLGIAIGLMTNLTI), 29–49 (YLSLAVLAALDTLIGGIRAHL), and 57–77 (VFVSGFFFNIILAISLAFLGV).

It belongs to the sbp family.

Its subcellular location is the cell membrane. This is Small basic protein (sbp) from Bacillus subtilis (strain 168).